A 297-amino-acid polypeptide reads, in one-letter code: MSKVSDLFDVTWEDMRDKMKTWREENYRNSEHVIEVGEELINEHASKLGDDIWIIYEQVMIAALDCGRDDIAMSCLQELRRQFPGSHRVKRLTGLRFEAMERYDDALQIYDRILQDDPTNTAARKRKIAIRKAQGRNSEAIRELNEYLEQFVGDQEAWHELAELYINELDYAKAAFCLEELILTNPHNHFYYQQFAEVKYTQGGLENLELSRKYFSQALKLNNHNMRALFGLYISSVHIASNPKASAKMKKDNVKYATWAASQIKKAYQLAGRTMTDTQTSLKAVEDMLETLQITQS.

TPR repeat units follow at residues 87 to 120 (HRVK…DPTN), 155 to 188 (QEAW…NPHN), and 192 to 225 (YQQF…NNHN).

It belongs to the EMC2 family. As to quaternary structure, component of the ER membrane protein complex (EMC).

The protein localises to the endoplasmic reticulum membrane. Functionally, part of the endoplasmic reticulum membrane protein complex (EMC) that enables the energy-independent insertion into endoplasmic reticulum membranes of newly synthesized membrane proteins. Preferentially accommodates proteins with transmembrane domains that are weakly hydrophobic or contain destabilizing features such as charged and aromatic residues. Involved in the cotranslational insertion of multi-pass membrane proteins in which stop-transfer membrane-anchor sequences become ER membrane spanning helices. It is also required for the post-translational insertion of tail-anchored/TA proteins in endoplasmic reticulum membranes. By mediating the proper cotranslational insertion of N-terminal transmembrane domains in an N-exo topology, with translocated N-terminus in the lumen of the ER, controls the topology of multi-pass membrane proteins. By regulating the insertion of various proteins in membranes, it is indirectly involved in many cellular processes. This is ER membrane protein complex subunit 2-A (emc2-a) from Xenopus laevis (African clawed frog).